The following is a 246-amino-acid chain: NADH-quinone oxidoreductase subunit C (246 aa).

The protein belongs to the complex I 30 kDa subunit family. As to quaternary structure, NDH-1 is composed of 14 different subunits. Subunits NuoB, C, D, E, F, and G constitute the peripheral sector of the complex.

It localises to the cell inner membrane. The catalysed reaction is a quinone + NADH + 5 H(+)(in) = a quinol + NAD(+) + 4 H(+)(out). Its function is as follows. NDH-1 shuttles electrons from NADH, via FMN and iron-sulfur (Fe-S) centers, to quinones in the respiratory chain. The immediate electron acceptor for the enzyme in this species is believed to be ubiquinone. Couples the redox reaction to proton translocation (for every two electrons transferred, four hydrogen ions are translocated across the cytoplasmic membrane), and thus conserves the redox energy in a proton gradient. The protein is NADH-quinone oxidoreductase subunit C of Halorhodospira halophila (strain DSM 244 / SL1) (Ectothiorhodospira halophila (strain DSM 244 / SL1)).